The chain runs to 121 residues: Large ribosomal subunit protein bL19 (121 aa).

Belongs to the bacterial ribosomal protein bL19 family.

Its function is as follows. This protein is located at the 30S-50S ribosomal subunit interface and may play a role in the structure and function of the aminoacyl-tRNA binding site. The chain is Large ribosomal subunit protein bL19 from Borreliella burgdorferi (strain ZS7) (Borrelia burgdorferi).